A 354-amino-acid polypeptide reads, in one-letter code: Uroporphyrinogen decarboxylase (354 aa).

Substrate-binding positions include Arg27–Arg31, Asp77, Tyr154, Thr209, and His327.

This sequence belongs to the uroporphyrinogen decarboxylase family. In terms of assembly, homodimer.

It localises to the cytoplasm. It carries out the reaction uroporphyrinogen III + 4 H(+) = coproporphyrinogen III + 4 CO2. The protein operates within porphyrin-containing compound metabolism; protoporphyrin-IX biosynthesis; coproporphyrinogen-III from 5-aminolevulinate: step 4/4. In terms of biological role, catalyzes the decarboxylation of four acetate groups of uroporphyrinogen-III to yield coproporphyrinogen-III. This is Uroporphyrinogen decarboxylase from Hydrogenovibrio crunogenus (strain DSM 25203 / XCL-2) (Thiomicrospira crunogena).